A 2087-amino-acid chain; its full sequence is Rho GTPase-activating protein 32 (2087 aa).

The PX; atypical domain occupies 131-245 (GSIQLSLSEE…LTWMEIDNKG (115 aa)). An SH3 domain is found at 259-321 (PAVGAAHVIK…PGHCVELINQ (63 aa)). The 196-residue stretch at 372 to 567 (CDLGEHLLNS…FILNHVDVLF (196 aa)) folds into the Rho-GAP domain. Residues serine 706, serine 709, serine 732, and serine 738 each carry the phosphoserine modification. Residues 818 to 858 (FLDSPGYSKDKPSANKKDAETGSSQCQTPGSTASSEPVSPL) form a disordered region. Residues 825–837 (SKDKPSANKKDAE) are compositionally biased toward basic and acidic residues. The span at 838 to 854 (TGSSQCQTPGSTASSEP) shows a compositional bias: polar residues. Phosphoserine is present on residues serine 852, serine 856, and serine 892. Over residues 927 to 938 (SNTTAQNASSST) the composition is skewed to low complexity. Disordered regions lie at residues 927 to 1038 (SNTT…PPKN), 1103 to 1143 (PAEQ…EQHH), and 1169 to 1257 (VPLD…ENTS). Serine 952 carries the phosphoserine modification. Low complexity-rich tracts occupy residues 994–1005 (SVSSSQSKAVAS) and 1019–1029 (QDSVPVSSVSL). Polar residues predominate over residues 1124–1138 (TTATGDPTHSNTTES). Basic and acidic residues predominate over residues 1172–1182 (DSEKSDDHVSF). Positions 1188–1203 (GKNSMPTVSFLDQDQS) are enriched in polar residues. At serine 1203 the chain carries Phosphoserine. Residues 1222–1232 (DKLHHPLEFAD) are compositionally biased toward basic and acidic residues. The interaction with GAB2 stretch occupies residues 1391 to 1711 (RVPLLHLRAE…YSYAGLAPRP (321 aa)). Arginine 1523 and arginine 1533 each carry asymmetric dimethylarginine. Serine 1585 carries the phosphoserine modification. The interaction with FYN stretch occupies residues 1685–2087 (PNRDFAFYNP…QHPETQIHAE (403 aa)). Residues 1798–1896 (PGKTGLLSVA…QFCESKNGPP (99 aa)) form a disordered region. The segment covering 1823–1838 (GEDRFYRRHPEAEMDR) has biased composition (basic and acidic residues). Residues 1847-1862 (STQPEKPSLPQKQSSL) show a composition bias toward polar residues. The span at 1875-1889 (PEHRAHQEASHRQFC) shows a compositional bias: basic and acidic residues. Arginine 2037 is subject to Omega-N-methylarginine.

The protein belongs to the PX domain-containing GAP family. As to quaternary structure, interacts with NTRK1 (via cytoplasmic domain); the interaction is independent of the phosphorylation state of NTRK1. Interacts with SHC3 (via SH2 domain). Interacts with RASA1 (via SH3 domain); the interaction is necessary for the Ras activation and cell transforming activities of ARHGAP32. Interacts with GAB1 and GAB2. Interacts with CRK and CRKL. Found in a complex with CRKL and BCAR1; upon EGF stimulation BCAR1 may be replaced by EGFR. Interacts with NCK1 (via SH3 domain); NCK1 recruits phosphorylated BCAR1 to the complex. Isoform 2 interacts with FYN; the interaction appears to be dependent on tyrosine phosphorylation of ARHGAP32. Interacts with EGFR; the interaction requires EGF stimulation and is increased by SHC3. Interacts with CDC42; the interaction requires constitutively active CDC42. Interacts with CTNNB1. Interacts with GRIN2B. Interacts with DLG4 and CDH2. Interacts with GPHN. In terms of processing, isoform 2 is phosphorylated on multiple tyrosine residues by FYN. Phosphorylated tyrosine residues undergo dephosphorylation after stimulation of NMDA receptors. Phosphorylated in vitro by CaMK2 in the presence of calmodulin and calcium; which inhibits GAP activity. Isoform 1 and isoform 2 are highly expressed in brain and testis. Isoform 1 is also expressed in other tissues such as lung, liver and spleen.

It is found in the postsynaptic density. It localises to the cell projection. Its subcellular location is the dendritic spine. The protein localises to the cytoplasm. The protein resides in the cell cortex. It is found in the endosome membrane. It localises to the golgi apparatus membrane. Its subcellular location is the endoplasmic reticulum membrane. The protein localises to the membrane. Its function is as follows. GTPase-activating protein (GAP) promoting GTP hydrolysis on RHOA, CDC42 and RAC1 small GTPases. May be involved in the differentiation of neuronal cells during the formation of neurite extensions. Involved in NMDA receptor activity-dependent actin reorganization in dendritic spines. May mediate cross-talks between Ras- and Rho-regulated signaling pathways in cell growth regulation. Isoform 2 has higher GAP activity. The chain is Rho GTPase-activating protein 32 (ARHGAP32) from Homo sapiens (Human).